The following is a 116-amino-acid chain: Large ribosomal subunit protein uL23 (116 aa).

The protein belongs to the universal ribosomal protein uL23 family. In terms of assembly, part of the 50S ribosomal subunit. Contacts protein L29, and trigger factor when it is bound to the ribosome.

Functionally, one of the early assembly proteins it binds 23S rRNA. One of the proteins that surrounds the polypeptide exit tunnel on the outside of the ribosome. Forms the main docking site for trigger factor binding to the ribosome. The protein is Large ribosomal subunit protein uL23 of Psychrobacter arcticus (strain DSM 17307 / VKM B-2377 / 273-4).